We begin with the raw amino-acid sequence, 461 residues long: tRNA modification GTPase MnmE (461 aa).

3 residues coordinate (6S)-5-formyl-5,6,7,8-tetrahydrofolate: Arg-27, Glu-89, and Arg-128. In terms of domain architecture, TrmE-type G spans 224 to 382 (GLATAIVGRP…LENAIEKLFF (159 aa)). Asn-234 contacts K(+). GTP-binding positions include 234 to 239 (NVGKSS), 253 to 259 (TDIAGTT), and 278 to 281 (DTAG). Ser-238 contacts Mg(2+). Residues Thr-253, Ile-255, and Thr-258 each coordinate K(+). Thr-259 is a Mg(2+) binding site. Lys-461 is a (6S)-5-formyl-5,6,7,8-tetrahydrofolate binding site.

The protein belongs to the TRAFAC class TrmE-Era-EngA-EngB-Septin-like GTPase superfamily. TrmE GTPase family. In terms of assembly, homodimer. Heterotetramer of two MnmE and two MnmG subunits. Requires K(+) as cofactor.

It localises to the cytoplasm. In terms of biological role, exhibits a very high intrinsic GTPase hydrolysis rate. Involved in the addition of a carboxymethylaminomethyl (cmnm) group at the wobble position (U34) of certain tRNAs, forming tRNA-cmnm(5)s(2)U34. The protein is tRNA modification GTPase MnmE of Lactobacillus gasseri (strain ATCC 33323 / DSM 20243 / BCRC 14619 / CIP 102991 / JCM 1131 / KCTC 3163 / NCIMB 11718 / NCTC 13722 / AM63).